We begin with the raw amino-acid sequence, 462 residues long: Trigger factor (462 aa).

The PPIase FKBP-type domain occupies 172–257 (GDKATIDFVG…LKALAAPGET (86 aa)). The disordered stretch occupies residues 443 to 462 (LLAADEEDEEEAAESSAALV). A compositionally biased stretch (acidic residues) spans 444-455 (LAADEEDEEEAA).

This sequence belongs to the FKBP-type PPIase family. Tig subfamily.

It localises to the cytoplasm. The catalysed reaction is [protein]-peptidylproline (omega=180) = [protein]-peptidylproline (omega=0). Its function is as follows. Involved in protein export. Acts as a chaperone by maintaining the newly synthesized protein in an open conformation. Functions as a peptidyl-prolyl cis-trans isomerase. The chain is Trigger factor from Methylocella silvestris (strain DSM 15510 / CIP 108128 / LMG 27833 / NCIMB 13906 / BL2).